Here is a 128-residue protein sequence, read N- to C-terminus: Fluoride-specific ion channel FluC (128 aa).

4 consecutive transmembrane segments (helical) span residues 2 to 22 (LTFA…GAWL), 37 to 57 (WGTL…VALI), 65 to 85 (AWIR…FSTF), and 101 to 121 (AAAY…LGLA). The Na(+) site is built by Gly77 and Thr80.

The protein belongs to the fluoride channel Fluc/FEX (TC 1.A.43) family.

The protein resides in the cell inner membrane. It catalyses the reaction fluoride(in) = fluoride(out). With respect to regulation, na(+) is not transported, but it plays an essential structural role and its presence is essential for fluoride channel function. In terms of biological role, fluoride-specific ion channel. Important for reducing fluoride concentration in the cell, thus reducing its toxicity. The chain is Fluoride-specific ion channel FluC from Bordetella bronchiseptica (strain ATCC BAA-588 / NCTC 13252 / RB50) (Alcaligenes bronchisepticus).